We begin with the raw amino-acid sequence, 681 residues long: RNA polymerase sigma factor RpoD (681 aa).

Disordered regions lie at residues 1–60 and 239–270; these read MKKK…ETAK and DDDE…VSEK. Residues 261-270 are compositionally biased toward basic and acidic residues; that stretch reads EERKKVVSEK. The segment at 446-516 is sigma-70 factor domain-2; the sequence is MAKSNLRLVV…SRAIADQART (71 aa). The Interaction with polymerase core subunit RpoC motif lies at 470 to 473; it reads DLIQ. The interval 525-601 is sigma-70 factor domain-3; it reads DTINRINKVM…DKNIVSSIDH (77 aa). Residues 614-668 are sigma-70 factor domain-4; the sequence is VLDQLNEREKAVIRMRFGLLDDESDRTLEEIGKELNVTRERVRQIESSAIKKLRS. Residues 641–660 constitute a DNA-binding region (H-T-H motif); the sequence is LEEIGKELNVTRERVRQIES.

The protein belongs to the sigma-70 factor family. RpoD/SigA subfamily. Interacts transiently with the RNA polymerase catalytic core.

Its subcellular location is the cytoplasm. Functionally, sigma factors are initiation factors that promote the attachment of RNA polymerase to specific initiation sites and are then released. This sigma factor is the primary sigma factor during exponential growth. The sequence is that of RNA polymerase sigma factor RpoD from Helicobacter pylori (strain J99 / ATCC 700824) (Campylobacter pylori J99).